Consider the following 273-residue polypeptide: uncharacterized protein (273 aa).

Residues 29–131 (TLVCVHGFLS…VVLLCSSGYL (103 aa)) form the AB hydrolase-1 domain. Active-site residues include S102 and H254.

The protein belongs to the DmpD/TodF/XylF esterase family.

This is an uncharacterized protein from Bacillus subtilis (strain 168).